The chain runs to 478 residues: Light-independent protochlorophyllide reductase subunit N (478 aa).

The [4Fe-4S] cluster site is built by C22, C47, and C107.

This sequence belongs to the BchN/ChlN family. As to quaternary structure, protochlorophyllide reductase is composed of three subunits; ChlL, ChlN and ChlB. Forms a heterotetramer of two ChlB and two ChlN subunits. [4Fe-4S] cluster serves as cofactor.

The protein localises to the plastid. The protein resides in the chloroplast. It catalyses the reaction chlorophyllide a + oxidized 2[4Fe-4S]-[ferredoxin] + 2 ADP + 2 phosphate = protochlorophyllide a + reduced 2[4Fe-4S]-[ferredoxin] + 2 ATP + 2 H2O. The protein operates within porphyrin-containing compound metabolism; chlorophyll biosynthesis (light-independent). Component of the dark-operative protochlorophyllide reductase (DPOR) that uses Mg-ATP and reduced ferredoxin to reduce ring D of protochlorophyllide (Pchlide) to form chlorophyllide a (Chlide). This reaction is light-independent. The NB-protein (ChlN-ChlB) is the catalytic component of the complex. This chain is Light-independent protochlorophyllide reductase subunit N, found in Chlorokybus atmophyticus (Soil alga).